A 362-amino-acid polypeptide reads, in one-letter code: 3-dehydroquinate synthase (362 aa).

This sequence belongs to the archaeal-type DHQ synthase family.

It carries out the reaction 2-amino-2,3,7-trideoxy-D-lyxo-hept-6-ulosonate + NAD(+) + H2O = 3-dehydroquinate + NH4(+) + NADH + H(+). Catalyzes the oxidative deamination and cyclization of 2-amino-3,7-dideoxy-D-threo-hept-6-ulosonic acid (ADH) to yield 3-dehydroquinate (DHQ), which is fed into the canonical shikimic pathway of aromatic amino acid biosynthesis. The protein is 3-dehydroquinate synthase of Methanococcus aeolicus (strain ATCC BAA-1280 / DSM 17508 / OCM 812 / Nankai-3).